Consider the following 126-residue polypeptide: Actin-depolymerizing factor (126 aa).

Positions 1–126 (EDNCKLKFLE…SFDIIKSRAL (126 aa)) constitute an ADF-H domain.

Belongs to the actin-binding proteins ADF family. As to expression, preferentially in mature anther.

Functionally, actin-depolymerizing protein. Severs actin filaments (F-actin) and binds to actin monomers. This chain is Actin-depolymerizing factor, found in Brassica napus (Rape).